Consider the following 1402-residue polypeptide: DNA-directed RNA polymerase subunit beta' (1402 aa).

Residues Cys-71, Cys-73, Cys-86, and Cys-89 each coordinate Zn(2+). Residues Asp-462, Asp-464, and Asp-466 each coordinate Mg(2+). Positions 808, 881, 888, and 891 each coordinate Zn(2+).

This sequence belongs to the RNA polymerase beta' chain family. The RNAP catalytic core consists of 2 alpha, 1 beta, 1 beta' and 1 omega subunit. When a sigma factor is associated with the core the holoenzyme is formed, which can initiate transcription. Requires Mg(2+) as cofactor. The cofactor is Zn(2+).

It carries out the reaction RNA(n) + a ribonucleoside 5'-triphosphate = RNA(n+1) + diphosphate. Its function is as follows. DNA-dependent RNA polymerase catalyzes the transcription of DNA into RNA using the four ribonucleoside triphosphates as substrates. The chain is DNA-directed RNA polymerase subunit beta' from Hyphomonas neptunium (strain ATCC 15444).